We begin with the raw amino-acid sequence, 859 residues long: Photoactivated adenylate cyclase subunit beta-like protein FB (859 aa).

One can recognise a BLUF 1 domain in the interval Leu56 to Lys149. Residues Val205 to Ala333 form the Guanylate cyclase 1 domain. Positions Gly414 to Val449 are disordered. In terms of domain architecture, BLUF 2 spans Leu471–Thr563. Residues Val619–Glu748 form the Guanylate cyclase 2 domain. The tract at residues Ala813 to Arg859 is disordered. A compositionally biased stretch (basic and acidic residues) spans Arg815–Phe831. The span at Arg846 to Arg859 shows a compositional bias: polar residues.

The protein belongs to the adenylyl cyclase class-4/guanylyl cyclase family. Heterotetramer of two alpha and two beta subunits.

The protein localises to the cell projection. It is found in the cilium. The protein resides in the flagellum. This is Photoactivated adenylate cyclase subunit beta-like protein FB from Euglena gracilis.